The following is a 466-amino-acid chain: Coproporphyrinogen III oxidase (466 aa).

FAD contacts are provided by residues 9–14 (GAGITG), 34–35 (EA), Lys-42, 56–59 (GPES), Val-254, and 446–448 (VGL).

This sequence belongs to the protoporphyrinogen/coproporphyrinogen oxidase family. Coproporphyrinogen III oxidase subfamily. Requires FAD as cofactor.

The protein resides in the cytoplasm. It catalyses the reaction coproporphyrinogen III + 3 O2 = coproporphyrin III + 3 H2O2. The protein operates within porphyrin-containing compound metabolism; protoheme biosynthesis. The generation of protoporphyrin IX, but not coproporphyrin III, is stimulated by heme-bound HemQ. This stimulatory effect is mediated by superoxide. Inhibited by acifluorfen analogs. In terms of biological role, involved in coproporphyrin-dependent heme b biosynthesis. Catalyzes the oxidation of coproporphyrinogen III to coproporphyrin III. Can also oxidize protoporphyrinogen IX. The protein is Coproporphyrinogen III oxidase of Staphylococcus aureus (strain NCTC 8325 / PS 47).